The primary structure comprises 126 residues: Profilin-3 (126 aa).

Belongs to the profilin family. In terms of assembly, occurs in many kinds of cells as a complex with monomeric actin in a 1:1 ratio. As to expression, in embryos, expression is specifically detected in body wall muscle cells. In adults, expression is localized to a striking dot-like fashion in body wall muscle.

It localises to the cytoplasm. Its subcellular location is the cytoskeleton. Binds to actin and affects the structure of the cytoskeleton. At high concentrations, profilin prevents the polymerization of actin, whereas it enhances it at low concentrations. By binding to PIP2, it inhibits the formation of IP3 and DG. Also binds to poly(L-proline) and phosphatidylinositol 4,5-bisphosphate micelles. In Caenorhabditis elegans, this protein is Profilin-3 (pfn-3).